The following is a 510-amino-acid chain: NAD(P)H-quinone oxidoreductase subunit 2, chloroplastic (510 aa).

A run of 13 helical transmembrane segments spans residues 28-48 (DGSF…LLII), 57-77 (IPWL…TLLF), 99-119 (IFQF…VEYI), 124-144 (MALT…MFLC), 149-169 (LITI…LSGY), 183-203 (YLLM…WLYG), 227-247 (PGIS…LSPA), 295-315 (WHLL…LIAI), 323-343 (MLAY…IVGD), 354-374 (YMLF…LFGL), 395-415 (ALSL…AGFF), 418-438 (LYLF…IGLL), and 484-504 (MIVC…IIAI).

This sequence belongs to the complex I subunit 2 family. NDH is composed of at least 16 different subunits, 5 of which are encoded in the nucleus.

The protein localises to the plastid. Its subcellular location is the chloroplast thylakoid membrane. The catalysed reaction is a plastoquinone + NADH + (n+1) H(+)(in) = a plastoquinol + NAD(+) + n H(+)(out). It catalyses the reaction a plastoquinone + NADPH + (n+1) H(+)(in) = a plastoquinol + NADP(+) + n H(+)(out). NDH shuttles electrons from NAD(P)H:plastoquinone, via FMN and iron-sulfur (Fe-S) centers, to quinones in the photosynthetic chain and possibly in a chloroplast respiratory chain. The immediate electron acceptor for the enzyme in this species is believed to be plastoquinone. Couples the redox reaction to proton translocation, and thus conserves the redox energy in a proton gradient. This Silene latifolia (White campion) protein is NAD(P)H-quinone oxidoreductase subunit 2, chloroplastic.